Reading from the N-terminus, the 292-residue chain is ATP synthase gamma chain (292 aa).

This sequence belongs to the ATPase gamma chain family. F-type ATPases have 2 components, CF(1) - the catalytic core - and CF(0) - the membrane proton channel. CF(1) has five subunits: alpha(3), beta(3), gamma(1), delta(1), epsilon(1). CF(0) has three main subunits: a, b and c.

It localises to the cell membrane. Its function is as follows. Produces ATP from ADP in the presence of a proton gradient across the membrane. The gamma chain is believed to be important in regulating ATPase activity and the flow of protons through the CF(0) complex. This Streptococcus mutans serotype c (strain ATCC 700610 / UA159) protein is ATP synthase gamma chain.